Here is a 761-residue protein sequence, read N- to C-terminus: Prolyl endopeptidase FAP (761 aa).

Over 1 to 4 (MKTW) the chain is Cytoplasmic. A helical; Signal-anchor for type II membrane protein membrane pass occupies residues 5 to 25 (LKTVFGVTTLAALALVVICIV). Over 26–761 (LRPSRVYKPE…FLKQCFSLSD (736 aa)) the chain is Extracellular. N-linked (GlcNAc...) asparagine glycosylation is found at N49, N92, and N99. Substrate contacts are provided by E203 and E204. N-linked (GlcNAc...) asparagine glycans are attached at residues N227 and N314. Cystine bridges form between C321-C332, C438-C441, and C448-C466. The active-site Charge relay system is S624. C643 and C756 are oxidised to a cystine. The N-linked (GlcNAc...) asparagine glycan is linked to N679. Catalysis depends on charge relay system residues D702 and H734.

This sequence belongs to the peptidase S9B family. As to quaternary structure, homodimer; homodimerization is required for activity of both plasma membrane and soluble forms. The monomer is inactive. Heterodimer with DPP4. Interacts with PLAUR; the interaction occurs at the cell surface of invadopodia membranes. Interacts with ITGB1. Interacts with ITGA3. Associates with integrin alpha-3/beta-1; the association occurs in a collagen-dependent manner at the cell surface of invadopodia membranes. N-glycosylated. Post-translationally, the N-terminus may be blocked. Expressed strongly in uterus, pancreas, submaxillary gland and skin, less in lymph node, ovary, skeletal muscle, adrenal and bone marrow. Expressed in reactive stromal fibroblast in epithelial cancers. Expressed in melanocytes but not melanomas (at protein level). Detected in fibroblasts, in placenta, uterus, embryos from day 7-19 and in newborn mice (P1).

The protein resides in the cell surface. Its subcellular location is the cell membrane. It is found in the cell projection. It localises to the lamellipodium membrane. The protein localises to the invadopodium membrane. The protein resides in the ruffle membrane. Its subcellular location is the membrane. It is found in the secreted. It catalyses the reaction Hydrolysis of Pro-|-Xaa &gt;&gt; Ala-|-Xaa in oligopeptides.. It carries out the reaction Release of an N-terminal dipeptide, Xaa-Yaa-|-Zaa-, from a polypeptide, preferentially when Yaa is Pro, provided Zaa is neither Pro nor hydroxyproline.. With respect to regulation, gelatinase activity is inhibited by serine-protease inhibitors, such as phenylmethylsulfonyl fluoride (PMSF), 4-(2-aminoethyl)-benzenesulfonyl fluoride hydrochloride (AEBSF), 4-amidino phenylsulfonyl fluoride (APSF) and diisopropyl fluorophosphate (DFP), N-ethylmaleimide (NEM) and phenylmethylsulfonyl fluoride (PMSF). Dipeptidyl peptidase activity is inhibited by 2,2'-azino-bis(3-ethylbenzthiazoline-6-sulfonic acid), diisopropylfluorophosphate (DFP). Prolyl endopeptidase activity is inhibited by the boronic acid peptide Ac-Gly-BoroPro, Ac-Gly-Pro-chloromethyl ketone and Thr-Ser-Gly-chloromethyl ketone. Its function is as follows. Cell surface glycoprotein serine protease that participates in extracellular matrix degradation and involved in many cellular processes including tissue remodeling, fibrosis, wound healing, inflammation and tumor growth. Both plasma membrane and soluble forms exhibit post-proline cleaving endopeptidase activity, with a marked preference for Ala/Ser-Gly-Pro-Ser/Asn/Ala consensus sequences, on substrate such as alpha-2-antiplasmin SERPINF2 and SPRY2. Degrade also gelatin, heat-denatured type I collagen, but not native collagen type I and IV, vibronectin, tenascin, laminin, fibronectin, fibrin or casein. Also has dipeptidyl peptidase activity, exhibiting the ability to hydrolyze the prolyl bond two residues from the N-terminus of synthetic dipeptide substrates provided that the penultimate residue is proline, with a preference for Ala-Pro, Ile-Pro, Gly-Pro, Arg-Pro and Pro-Pro. Natural neuropeptide hormones for dipeptidyl peptidase are the neuropeptide Y (NPY), peptide YY (PYY), substance P (TAC1) and brain natriuretic peptide 32 (NPPB). The plasma membrane form, in association with either DPP4, PLAUR or integrins, is involved in the pericellular proteolysis of the extracellular matrix (ECM), and hence promotes cell adhesion, migration and invasion through the ECM. Plays a role in tissue remodeling during development and wound healing. Participates in the cell invasiveness towards the ECM in malignant melanoma cancers. Enhances tumor growth progression by increasing angiogenesis, collagen fiber degradation and apoptosis and by reducing antitumor response of the immune system. Promotes glioma cell invasion through the brain parenchyma by degrading the proteoglycan brevican. Acts as a tumor suppressor in melanocytic cells through regulation of cell proliferation and survival in a serine protease activity-independent manner. The sequence is that of Prolyl endopeptidase FAP from Mus musculus (Mouse).